Consider the following 31-residue polypeptide: Hemocyanin subunit 1 (31 aa).

Belongs to the tyrosinase family. Hemocyanin subfamily. As to expression, hemolymph.

It is found in the secreted. Its subcellular location is the extracellular space. Functionally, hemocyanins are copper-containing oxygen carriers occurring freely dissolved in the hemolymph of many mollusks and arthropods. This is Hemocyanin subunit 1 from Homarus americanus (American lobster).